Here is a 72-residue protein sequence, read N- to C-terminus: Translation initiation factor IF-1 (72 aa).

An S1-like domain is found at 1–72; sequence MAKDDVIEID…DKGRITFRYK (72 aa).

The protein belongs to the IF-1 family. As to quaternary structure, component of the 30S ribosomal translation pre-initiation complex which assembles on the 30S ribosome in the order IF-2 and IF-3, IF-1 and N-formylmethionyl-tRNA(fMet); mRNA recruitment can occur at any time during PIC assembly.

It is found in the cytoplasm. Functionally, one of the essential components for the initiation of protein synthesis. Stabilizes the binding of IF-2 and IF-3 on the 30S subunit to which N-formylmethionyl-tRNA(fMet) subsequently binds. Helps modulate mRNA selection, yielding the 30S pre-initiation complex (PIC). Upon addition of the 50S ribosomal subunit IF-1, IF-2 and IF-3 are released leaving the mature 70S translation initiation complex. This is Translation initiation factor IF-1 from Campylobacter jejuni subsp. doylei (strain ATCC BAA-1458 / RM4099 / 269.97).